The chain runs to 82 residues: Small ribosomal subunit protein uS17c (82 aa).

The protein belongs to the universal ribosomal protein uS17 family. As to quaternary structure, part of the 30S ribosomal subunit.

The protein resides in the plastid. Its subcellular location is the chloroplast. In terms of biological role, one of the primary rRNA binding proteins, it binds specifically to the 5'-end of 16S ribosomal RNA. This is Small ribosomal subunit protein uS17c (rps17) from Emiliania huxleyi (Coccolithophore).